The following is a 179-amino-acid chain: 3-hydroxyanthranilate 3,4-dioxygenase (179 aa).

O2 is bound at residue Arg47. Fe cation is bound by residues His51, Glu57, and His96. Position 57 (Glu57) interacts with substrate. 2 residues coordinate substrate: Arg100 and Glu110. Positions 125, 128, 162, and 165 each coordinate Fe cation.

The protein belongs to the 3-HAO family. Fe(2+) is required as a cofactor.

It carries out the reaction 3-hydroxyanthranilate + O2 = (2Z,4Z)-2-amino-3-carboxymuconate 6-semialdehyde. The protein operates within cofactor biosynthesis; NAD(+) biosynthesis; quinolinate from L-kynurenine: step 3/3. Its function is as follows. Catalyzes the oxidative ring opening of 3-hydroxyanthranilate to 2-amino-3-carboxymuconate semialdehyde, which spontaneously cyclizes to quinolinate. In Bacillus cereus (strain 03BB102), this protein is 3-hydroxyanthranilate 3,4-dioxygenase.